A 384-amino-acid polypeptide reads, in one-letter code: Outer membrane protein assembly factor BamB (384 aa).

A signal peptide spans 1 to 21; sequence MKLTLKRKFIAVLALTSLLGA. Cysteine 22 carries N-palmitoyl cysteine lipidation. The S-diacylglycerol cysteine moiety is linked to residue cysteine 22.

This sequence belongs to the BamB family. As to quaternary structure, part of the Bam complex.

The protein resides in the cell outer membrane. In terms of biological role, part of the outer membrane protein assembly complex, which is involved in assembly and insertion of beta-barrel proteins into the outer membrane. The chain is Outer membrane protein assembly factor BamB from Taylorella asinigenitalis (strain MCE3).